Reading from the N-terminus, the 262-residue chain is Tethering factor for nuclear proteasome cut8 (262 aa).

It belongs to the cut8/STS1 family. In terms of assembly, binds the proteasome. In terms of processing, the N-terminal part (residues 1 to 72) is polyubiquitinated by rhp6, which is required for the interaction with the proteasome.

Its subcellular location is the nucleus envelope. Its function is as follows. Together with nucleoporin alm1, tethers the proteasome to the nuclear envelope. Involved in ubiquitin-mediated protein degradation and facilitates the degradation of nuclear proteins like mitotic cyclin and cut2. Required for normal progression of anaphase. The sequence is that of Tethering factor for nuclear proteasome cut8 from Schizosaccharomyces pombe (strain 972 / ATCC 24843) (Fission yeast).